Here is a 229-residue protein sequence, read N- to C-terminus: PKHD-type hydroxylase RPD_3334 (229 aa).

The Fe2OG dioxygenase domain maps to glutamine 78–serine 180. Residues histidine 98, aspartate 100, and histidine 161 each contribute to the Fe cation site. Arginine 171 provides a ligand contact to 2-oxoglutarate.

Fe(2+) serves as cofactor. Requires L-ascorbate as cofactor.

This is PKHD-type hydroxylase RPD_3334 from Rhodopseudomonas palustris (strain BisB5).